The primary structure comprises 141 residues: Hemoglobin subunit alpha-D (141 aa).

One can recognise a Globin domain in the interval 1–141 (VLTAEDRRLL…VADVLCEKYR (141 aa)). 2 residues coordinate heme b: glutamine 58 and histidine 87.

It belongs to the globin family. Heterotetramer of two alpha chains and two beta chains. Red blood cells.

Functionally, involved in oxygen transport from the lung to the various peripheral tissues. The polypeptide is Hemoglobin subunit alpha-D (Drymarchon melanurus erebennus (Texas indigo snake)).